The primary structure comprises 223 residues: Cytidylate kinase (223 aa).

Position 12–20 (12–20 (GPSGVGKGT)) interacts with ATP.

Belongs to the cytidylate kinase family. Type 1 subfamily.

It localises to the cytoplasm. It carries out the reaction CMP + ATP = CDP + ADP. The enzyme catalyses dCMP + ATP = dCDP + ADP. This is Cytidylate kinase from Xylella fastidiosa (strain M23).